A 325-amino-acid chain; its full sequence is Olfactory receptor 14L1 (325 aa).

Over 1–43 (MAQFNKNQLIACRRNGTTTSDFNQTEVAEFFLMGFSNSWDIQI) the chain is Extracellular. The chain crosses the membrane as a helical span at residues 44 to 64 (VHAALFFLVYLAAVIGNLLII). The Cytoplasmic portion of the chain corresponds to 65-72 (ILTTLDVH). A helical membrane pass occupies residues 73–93 (LQTPMYFFLRNLSFLDFCYIS). Over 94-117 (VTIPKSIVSSLTHDTSISFFGCAL) the chain is Extracellular. A helical membrane pass occupies residues 118–138 (QAFFFMDLATTEVAILTVMSY). Over 139–151 (DRYMAICRPLHYE) the chain is Cytoplasmic. Residues 152–172 (VIINQGVCLRMMAMSWLSGVI) traverse the membrane as a helical segment. The Extracellular segment spans residues 173–214 (CGFMHVIATFSLPFCGRNRIRQFFCNIPQLLSLLDPKVITIE). Residues 215–235 (IGVMVFGTSLVIISFVVITLS) form a helical membrane-spanning segment. The Cytoplasmic portion of the chain corresponds to 236-255 (YMYIFSVIMRIPSKEGRSKT). A helical transmembrane segment spans residues 256–276 (FSTCIPHLVVVTLFMISGSIA). The Extracellular portion of the chain corresponds to 277–289 (YVKPISNSPPVLD). A helical membrane pass occupies residues 290-310 (VFLSAFYTVVPPTLNPVIYSL). Residues 311–325 (RNRDMKAALRRQCGP) are Cytoplasmic-facing.

The protein belongs to the G-protein coupled receptor 1 family.

It is found in the cell membrane. Odorant receptor. The protein is Olfactory receptor 14L1 of Homo sapiens (Human).